The primary structure comprises 185 residues: Thioredoxin F2, chloroplastic (185 aa).

The region spanning 59–184 is the Thioredoxin domain; sequence RRIGSCVVRC…LLAAIEAARS (126 aa). Active-site nucleophile residues include C109 and C112. C109 and C112 are disulfide-bonded. Position 136 is an S-glutathionyl cysteine; transient (C136).

The protein belongs to the thioredoxin family. Plant F-type subfamily. Glutathionylation at Cys-136 decreases its ability to be reduced by ferredoxin-thioredoxin reductase and reduces its efficiency in activating target chloroplastic enzymes.

The protein localises to the plastid. The protein resides in the chloroplast stroma. Probable thiol-disulfide oxidoreductase involved in the redox regulation of enzymes of both reductive pentose phosphate pathway (Calvin-Benson cycle) and oxidative pentose phosphate pathway. The chain is Thioredoxin F2, chloroplastic from Arabidopsis thaliana (Mouse-ear cress).